The sequence spans 381 residues: MKAVHFGAGNIGRGFIGKLLSDANVAVTFADIDKPLVDQLSHDQSYKVKVVGSQCQVDTVTHVTAVNSASQDVIDRIVHTDLVTTAVGPNVLDIIAKTIATGLAQRFEANNEKSLNIIACENMVRGTTHLKNEVYKHLDEQYHARADALVGFVDSAVDRIVPPSEAANDPLEVTVESFSEWIVDKQQFKGDIPVIEGMEMTDNLMAFVERKLFTLNTGHIMTAYLGALKGHETVRDAIEDNEIREQVKAAMQESGEVLIKRYGFDREVHNAYIEKILGRFANPYLRDEIDRVGRQPIRKLGENDRLIKPLLGTIEYGTENKTLLKGIAAAFMYTNESDPQAVELQTSLKEQGLRPTLAHYTGIDADSKEAKTIETIFLQLS.

3-14 contributes to the NAD(+) binding site; sequence AVHFGAGNIGRG.

It belongs to the mannitol dehydrogenase family.

The catalysed reaction is D-mannitol 1-phosphate + NAD(+) = beta-D-fructose 6-phosphate + NADH + H(+). The chain is Mannitol-1-phosphate 5-dehydrogenase from Photobacterium profundum (strain SS9).